Here is a 252-residue protein sequence, read N- to C-terminus: Phosphate import ATP-binding protein PstB (252 aa).

An ABC transporter domain is found at 5 to 247 (MRGQDVKVFY…PKEQRTQDYI (243 aa)). 37–44 (GPSGCGKS) contributes to the ATP binding site.

This sequence belongs to the ABC transporter superfamily. Phosphate importer (TC 3.A.1.7) family. As to quaternary structure, the complex is composed of two ATP-binding proteins (PstB), two transmembrane proteins (PstC and PstA) and a solute-binding protein (PstS).

Its subcellular location is the cell inner membrane. It carries out the reaction phosphate(out) + ATP + H2O = ADP + 2 phosphate(in) + H(+). Its function is as follows. Part of the ABC transporter complex PstSACB involved in phosphate import. Responsible for energy coupling to the transport system. This chain is Phosphate import ATP-binding protein PstB, found in Bartonella henselae (strain ATCC 49882 / DSM 28221 / CCUG 30454 / Houston 1) (Rochalimaea henselae).